Reading from the N-terminus, the 851-residue chain is Beta-galactosidase BoGH2A (851 aa).

Residues 1–19 (MMIGKLKYLMLGGCLILGS) form the signal peptide. Cys20 carries the N-palmitoyl cysteine lipid modification. Cys20 carries S-diacylglycerol cysteine lipidation. Glu437 acts as the Proton donor in catalysis. Glu544 acts as the Nucleophile in catalysis.

This sequence belongs to the glycosyl hydrolase 2 family.

The protein localises to the cell inner membrane. The catalysed reaction is Hydrolysis of terminal non-reducing beta-D-galactose residues in beta-D-galactosides.. It functions in the pathway glucan metabolism; xyloglucan degradation. Its function is as follows. Catalyzes the hydrolysis of terminal non-reducing beta-D-galactose residues in beta-D-galactosides in xyloglucan degradation, converting 'L' units to 'X' units. The protein is Beta-galactosidase BoGH2A of Bacteroides ovatus (strain ATCC 8483 / DSM 1896 / JCM 5824 / BCRC 10623 / CCUG 4943 / NCTC 11153).